We begin with the raw amino-acid sequence, 427 residues long: Glutamate-1-semialdehyde 2,1-aminomutase (427 aa).

An N6-(pyridoxal phosphate)lysine modification is found at Lys-265.

It belongs to the class-III pyridoxal-phosphate-dependent aminotransferase family. HemL subfamily. In terms of assembly, homodimer. Requires pyridoxal 5'-phosphate as cofactor.

The protein localises to the cytoplasm. The enzyme catalyses (S)-4-amino-5-oxopentanoate = 5-aminolevulinate. It participates in porphyrin-containing compound metabolism; protoporphyrin-IX biosynthesis; 5-aminolevulinate from L-glutamyl-tRNA(Glu): step 2/2. The protein is Glutamate-1-semialdehyde 2,1-aminomutase of Bordetella pertussis (strain Tohama I / ATCC BAA-589 / NCTC 13251).